The primary structure comprises 342 residues: S-adenosylmethionine:tRNA ribosyltransferase-isomerase (342 aa).

It belongs to the QueA family. In terms of assembly, monomer.

It is found in the cytoplasm. The catalysed reaction is 7-aminomethyl-7-carbaguanosine(34) in tRNA + S-adenosyl-L-methionine = epoxyqueuosine(34) in tRNA + adenine + L-methionine + 2 H(+). It functions in the pathway tRNA modification; tRNA-queuosine biosynthesis. In terms of biological role, transfers and isomerizes the ribose moiety from AdoMet to the 7-aminomethyl group of 7-deazaguanine (preQ1-tRNA) to give epoxyqueuosine (oQ-tRNA). This chain is S-adenosylmethionine:tRNA ribosyltransferase-isomerase, found in Listeria monocytogenes serotype 4b (strain F2365).